A 797-amino-acid polypeptide reads, in one-letter code: MPLICIVYFLQYLDKIAISYASVTGLRESANLHGNQFNWVSTSTESIFPDCSTGPLSKNNVCDTSLDPVSRAKSLVAAMTLEEKINNTKYDSSGAPRLGLPAYNWWNEALHGVAEGHGVSFSDSGNFSYATSFPMPILLGAAFDDDLVKQVATVISTEARAFANGGHAGLDYWTPNINPFRDPRWGRGQETPGEDPLHLSRYVYHLVDGLQDGIGPERPKVVATCKHFAAYDLENWEGIERYAFDAVVSPQDLSEYYLPSFKTCTRDAKVDAVMCSYNSLNGIPTCADRWLLQTLLREHWGWEQTGHWVTGDCGAIDNIYADHHYVADGAHAAAAALNAGTDLDCGSVFPEYLGSALQQGLYNNQTLNNALIRLYSSLVKLGYFDPADDQPYRSIGWNEVFTPAAEELAHKATVEGIVMLKNDGTLPLKSNGTVAIIGPFANATTQLQGNYEGPPKYIRTLIWAAVHNGYKVKFSQGTDINSNSSAGFAEAISAAKEADTVIYAGGIDNTIEKESQDRTTIVWPGNQLDLIEQLSDLEKPLIVVQFGGGQVDDSSLLANAGVGALLWAGYPSQAGGAAVFDILTGKSAPAGRLPVTQYPASYVDEVPMTDMTLRPGSNNPGRTYRWYDKAVLPFGFGLHYTTFNVSWNHAEYGPYNTDSVASGTTNAPVDTELFDTFSITVTNTGNVASDYIALLFLTADGVGPEPYPIKTLVGYSRAKGIEPGQSQQVKLDVSVGSVARTAENGDLVLYPGSYKLEVDVGQDFPTATFTVSGKEKVLDEFPEPQQNATSAVTRRGR.

The N-terminal stretch at 1-21 is a signal peptide; the sequence is MPLICIVYFLQYLDKIAISYA. Asn-86 and Asn-126 each carry an N-linked (GlcNAc...) asparagine glycan. The active site involves Asp-312. 6 N-linked (GlcNAc...) asparagine glycosylation sites follow: Asn-364, Asn-431, Asn-442, Asn-483, Asn-644, and Asn-787.

It belongs to the glycosyl hydrolase 3 family.

It localises to the secreted. It carries out the reaction Hydrolysis of (1-&gt;4)-beta-D-xylans, to remove successive D-xylose residues from the non-reducing termini.. It functions in the pathway glycan degradation; xylan degradation. Its function is as follows. Xylan 1,4-beta-xylosidase involved in the hydrolysis of xylan, a major structural heterogeneous polysaccharide found in plant biomass representing the second most abundant polysaccharide in the biosphere, after cellulose. In Aspergillus oryzae (strain ATCC 42149 / RIB 40) (Yellow koji mold), this protein is Probable exo-1,4-beta-xylosidase bxlB (bxlB).